The following is a 332-amino-acid chain: Probable electron transfer flavoprotein subunit alpha, mitochondrial (332 aa).

Residue 275 to 303 (LYIAIGISGAIQHLAGMKDSKVIVAINKD) participates in FAD binding.

This sequence belongs to the ETF alpha-subunit/FixB family. Heterodimer of an alpha and a beta subunit. Requires FAD as cofactor.

It is found in the mitochondrion matrix. Its function is as follows. The electron transfer flavoprotein serves as a specific electron acceptor for several dehydrogenases, including five acyl-CoA dehydrogenases, glutaryl-CoA and sarcosine dehydrogenase. It transfers the electrons to the main mitochondrial respiratory chain via ETF-ubiquinone oxidoreductase (ETF dehydrogenase). The chain is Probable electron transfer flavoprotein subunit alpha, mitochondrial from Caenorhabditis elegans.